A 488-amino-acid chain; its full sequence is BRAP2 RING ZnF UBP domain-containing protein 1 (488 aa).

Residues 174 to 214 (CPICLERLDPDTSGIVSTLCDHSFQCSCTSKWTYLSCQVCR) form an RING-type; degenerate zinc finger. The segment at 208 to 301 (LSCQVCRLCQ…GKSVEMSTSC (94 aa)) adopts a UBP-type; degenerate zinc-finger fold. Zn(2+)-binding residues include Cys225, Cys228, Cys237, Cys240, Cys245, His252, His256, and His262. Positions 370–418 (EQIVVNTMQELQNKIEKCEEEKSGITEVNTKLIKEQDTWRKKAKEIEER) form a coiled coil. The interval 453–488 (MSSDTDGIREGTVLPVPISPEPVSSVRRQKKSNRRK) is disordered. The span at 465–478 (VLPVPISPEPVSSV) shows a compositional bias: low complexity. A compositionally biased stretch (basic residues) spans 479–488 (RRQKKSNRRK).

As to quaternary structure, component of the heteromeric E3 ligase complex made of BRIZ1 and BRIZ2. Forms heterooligomers with BRIZ2 via coiled-coil domains.

It catalyses the reaction S-ubiquitinyl-[E2 ubiquitin-conjugating enzyme]-L-cysteine + [acceptor protein]-L-lysine = [E2 ubiquitin-conjugating enzyme]-L-cysteine + N(6)-ubiquitinyl-[acceptor protein]-L-lysine.. Its pathway is protein modification; protein ubiquitination. RING-type ubiquitin E3 ligase required for seed germination and post-germination growth. The chain is BRAP2 RING ZnF UBP domain-containing protein 1 from Arabidopsis thaliana (Mouse-ear cress).